The following is a 293-amino-acid chain: NAD-dependent protein deacetylase (293 aa).

The Deacetylase sirtuin-type domain occupies 5-282 (PAHDHHTLQD…LHAPPHLPRA (278 aa)). NAD(+)-binding positions include 27–47 (GAGC…GGWK) and 105–108 (QNVD). His123 serves as the catalytic Proton acceptor. Zn(2+) is bound by residues Cys131, Cys134, Cys182, and Cys185. NAD(+) contacts are provided by residues 222–224 (GSS), 248–250 (NFG), and Cys266.

The protein belongs to the sirtuin family. Class II subfamily. Zn(2+) serves as cofactor.

It localises to the cytoplasm. It carries out the reaction N(6)-acetyl-L-lysyl-[protein] + NAD(+) + H2O = 2''-O-acetyl-ADP-D-ribose + nicotinamide + L-lysyl-[protein]. In terms of biological role, NAD-dependent protein deacetylase which modulates the activities of several enzymes which are inactive in their acetylated form. This is NAD-dependent protein deacetylase from Xanthomonas axonopodis pv. citri (strain 306).